A 249-amino-acid chain; its full sequence is Sesquipedalian-1 (249 aa).

Residues 17 to 113 (PVDNAGFLYK…WVKALSRASF (97 aa)) form the PH domain. 2 disordered regions span residues 134-159 (GGMALPQPQPQSLPLPPSLPSALAPV) and 194-219 (EATFRPGPEPPPPPPRRRASAPHGPL). Residues 140–152 (QPQPQSLPLPPSL) are compositionally biased toward pro residues. A Phosphoserine modification is found at S213. The short motif at 223–235 (PFARLHECYGQEI) is the F&amp;H element.

It belongs to the sesquipedalian family. In terms of assembly, forms homodimers and heterodimers with PHETA2. Interacts with OCRL and INPP5B. Interaction with OCRL may be important for endosomal morphology and function.

It is found in the early endosome. The protein resides in the recycling endosome. Its subcellular location is the golgi apparatus. The protein localises to the trans-Golgi network. It localises to the cytoplasmic vesicle. It is found in the clathrin-coated vesicle. Functionally, plays a role in endocytic trafficking. Required for receptor recycling from endosomes, both to the trans-Golgi network and the plasma membrane. The polypeptide is Sesquipedalian-1 (Homo sapiens (Human)).